The primary structure comprises 570 residues: Hydroxylamine reductase (570 aa).

4 residues coordinate [4Fe-4S] cluster: cysteine 5, cysteine 8, cysteine 17, and cysteine 23. Residues histidine 266, glutamate 290, cysteine 334, cysteine 425, cysteine 453, cysteine 478, glutamate 513, and lysine 515 each coordinate hybrid [4Fe-2O-2S] cluster. Cysteine 425 is modified (cysteine persulfide).

The protein belongs to the HCP family. The cofactor is [4Fe-4S] cluster. Hybrid [4Fe-2O-2S] cluster serves as cofactor.

Its subcellular location is the cytoplasm. It catalyses the reaction A + NH4(+) + H2O = hydroxylamine + AH2 + H(+). In terms of biological role, catalyzes the reduction of hydroxylamine to form NH(3) and H(2)O. This chain is Hydroxylamine reductase, found in Clostridium botulinum (strain Loch Maree / Type A3).